Reading from the N-terminus, the 399-residue chain is Glutamyl-tRNA reductase (399 aa).

Substrate contacts are provided by residues 45-48 (TCNR), S101, 106-108 (EDQ), and Q112. C46 acts as the Nucleophile in catalysis. 177–182 (GFGKIG) contributes to the NADP(+) binding site.

The protein belongs to the glutamyl-tRNA reductase family. In terms of assembly, homodimer.

It carries out the reaction (S)-4-amino-5-oxopentanoate + tRNA(Glu) + NADP(+) = L-glutamyl-tRNA(Glu) + NADPH + H(+). Its pathway is porphyrin-containing compound metabolism; protoporphyrin-IX biosynthesis; 5-aminolevulinate from L-glutamyl-tRNA(Glu): step 1/2. In terms of biological role, catalyzes the NADPH-dependent reduction of glutamyl-tRNA(Glu) to glutamate 1-semialdehyde (GSA). In Clostridium kluyveri (strain ATCC 8527 / DSM 555 / NBRC 12016 / NCIMB 10680 / K1), this protein is Glutamyl-tRNA reductase.